The chain runs to 301 residues: Radial spoke head 1 homolog (301 aa).

A compositionally biased stretch (acidic residues) spans 1 to 20 (MSDLGSEELEEEGENDLGEY). Residues 1 to 41 (MSDLGSEELEEEGENDLGEYEGERNEVGERHGHGKARLPNG) form a disordered region. MORN repeat units follow at residues 20–43 (YEGE…NGDT), 44–66 (YEGS…NGAR), 67–89 (YTGD…DGSR), 90–112 (YEGE…NNDT), 113–135 (YTGE…ETGS), and 159–181 (YQGK…IGCE). The span at 21–31 (EGERNEVGERH) shows a compositional bias: basic and acidic residues. Positions 225–301 (LSEEQPPPEG…FDEEPSDLQD (77 aa)) are disordered. Over residues 249–261 (PSEDIQAEGFEGE) the composition is skewed to acidic residues. Basic and acidic residues predominate over residues 262–278 (LEPRGADEDVDTFRQES). Polar residues predominate over residues 279 to 290 (QENSYDIDQGNL). A compositionally biased stretch (acidic residues) spans 292–301 (FDEEPSDLQD).

As to quaternary structure, component of the axonemal radial spoke 1 (RS1) and 2 (RS2) complexes, at least composed of spoke head proteins RSPH1, RSPH3, RSPH9 and the cilia-specific component RSPH4A or sperm-specific component RSPH6A, spoke stalk proteins RSPH14, DNAJB13, DYDC1, ROPN1L and NME5, and the RS1 complex-specific anchor protein IQUB. Interacts with RSPH3B. Interacts with RSPH4A. Interacts with RSPH6A. Expressed in the trachea, ependymal cells, oviduct and ependymal cells (at protein level). Germ cell specific. Specifically expressed in testis, and to a lower extent in ovary. Not expressed in somatic tissues.

The protein localises to the cytoplasm. It is found in the chromosome. It localises to the cytoskeleton. The protein resides in the cilium axoneme. Its subcellular location is the flagellum axoneme. In terms of biological role, functions as part of axonemal radial spoke complexes that play an important part in the motility of sperm and cilia. The protein is Radial spoke head 1 homolog (Rsph1) of Mus musculus (Mouse).